The chain runs to 163 residues: Ribonuclease P protein component 4 (163 aa).

4 residues coordinate Zn(2+): Cys-66, Cys-69, Cys-96, and Cys-99. A disordered region spans residues 110–163 (GPRGGAPISPPAAEYGSGGRDSGEREDKGPQGPPRQGGRDNRQGGGHQGGPKGD). Residues 152–163 (QGGGHQGGPKGD) show a composition bias toward gly residues.

Belongs to the eukaryotic/archaeal RNase P protein component 4 family. As to quaternary structure, consists of a catalytic RNA component and at least 4-5 protein subunits. Zn(2+) serves as cofactor.

It is found in the cytoplasm. The enzyme catalyses Endonucleolytic cleavage of RNA, removing 5'-extranucleotides from tRNA precursor.. Functionally, part of ribonuclease P, a protein complex that generates mature tRNA molecules by cleaving their 5'-ends. This is Ribonuclease P protein component 4 from Aeropyrum pernix (strain ATCC 700893 / DSM 11879 / JCM 9820 / NBRC 100138 / K1).